The chain runs to 66 residues: Ocellatin-PT3 (66 aa).

An N-terminal signal peptide occupies residues 1-22 (MAFLKKSLFLVLFLGLVSLSIC). Positions 23-39 (DEEKRQDEDDDDDDDEE) are excised as a propeptide. Val-66 bears the Valine amide mark.

As to expression, expressed by the skin glands.

The protein resides in the secreted. Has antibacterial activity against Gram-negative bacterium E.coli ATCC 25922 (MIC=320 uM) but not against S.pneumoniae ATCC 700603, S.choleraesuis ATCC 14028 or Gram-positive bacterium S.aureus ATCC 29313. Shows no hemolytic activity and no cytotoxicity. This is Ocellatin-PT3 from Leptodactylus pustulatus (Ceara white-lipped frog).